A 473-amino-acid chain; its full sequence is Photosystem II CP43 reaction center protein (473 aa).

A propeptide spanning residues 1–14 is cleaved from the precursor; that stretch reads MKTLYSLRRFYPVE. N-acetylthreonine is present on T15. Position 15 is a phosphothreonine (T15). Helical transmembrane passes span 69–93, 134–155, 178–200, 255–275, and 291–312; these read LFEV…PHLA, LLGP…KDRN, KALY…RKIT, KPFA…LSYS, and WFNN…ASQA. E367 is a [CaMn4O5] cluster binding site. The propeptide occupies 426-473; sequence LSTSHFVLGFFLFVGHLWHAGRARAAAAGFEKGIDRDFEPVLSMTPLN. A helical membrane pass occupies residues 447-471; sequence RARAAAAGFEKGIDRDFEPVLSMTP.

The protein belongs to the PsbB/PsbC family. PsbC subfamily. PSII is composed of 1 copy each of membrane proteins PsbA, PsbB, PsbC, PsbD, PsbE, PsbF, PsbH, PsbI, PsbJ, PsbK, PsbL, PsbM, PsbT, PsbX, PsbY, PsbZ, Psb30/Ycf12, at least 3 peripheral proteins of the oxygen-evolving complex and a large number of cofactors. It forms dimeric complexes. Binds multiple chlorophylls and provides some of the ligands for the Ca-4Mn-5O cluster of the oxygen-evolving complex. It may also provide a ligand for a Cl- that is required for oxygen evolution. PSII binds additional chlorophylls, carotenoids and specific lipids. is required as a cofactor. Over time a tryptophan in the fifth lumenal loop is converted to 2-hydroxy-2,3-dihydrotryptophan, 2-oxo-2,3-dihydrotryptophan, and kynurenine by oxidizing species from the active site. This oxidation targets the protein for turnover.

The protein resides in the plastid. Its subcellular location is the chloroplast thylakoid membrane. Functionally, one of the components of the core complex of photosystem II (PSII). It binds chlorophyll and helps catalyze the primary light-induced photochemical processes of PSII. PSII is a light-driven water:plastoquinone oxidoreductase, using light energy to abstract electrons from H(2)O, generating O(2) and a proton gradient subsequently used for ATP formation. This chain is Photosystem II CP43 reaction center protein, found in Spinacia oleracea (Spinach).